The primary structure comprises 360 residues: DNA polymerase IV (360 aa).

Residues 8–191 (VLHVDMDSFF…LPVGRIPGIG (184 aa)) enclose the UmuC domain. The Mg(2+) site is built by Asp-12 and Asp-110. Glu-111 is an active-site residue.

Belongs to the DNA polymerase type-Y family. Monomer. It depends on Mg(2+) as a cofactor.

The protein localises to the cytoplasm. It carries out the reaction DNA(n) + a 2'-deoxyribonucleoside 5'-triphosphate = DNA(n+1) + diphosphate. Poorly processive, error-prone DNA polymerase involved in untargeted mutagenesis. Copies undamaged DNA at stalled replication forks, which arise in vivo from mismatched or misaligned primer ends. These misaligned primers can be extended by PolIV. Exhibits no 3'-5' exonuclease (proofreading) activity. May be involved in translesional synthesis. The protein is DNA polymerase IV of Methanoculleus marisnigri (strain ATCC 35101 / DSM 1498 / JR1).